A 236-amino-acid polypeptide reads, in one-letter code: MREPKNAKVLSRLENVLVTQLDVNNFSSIKKSVEKAISHFGRIDVLLNNAGYSVYSPLESTTEEQIHNIFNTNVFGALEVIKAITPIFRSQHNGMIINVSSIGGKMTFPLGCLYYGTKYAIEGISEALTWEMQSIGVKVKIIEPGFTATEFRVEEGAGKHYAEYDNLKQKLYEDLLPKLKTATPPQKIAEVILQAATDESDELRYPTGDYVVEWMALRSKVDDATFLATHRKQMGL.

Asp22, Asn49, and Lys82 together coordinate NADP(+). Residues Ser100 and Tyr114 each act as proton donor in the active site. 2 residues coordinate NADP(+): Tyr114 and Lys118. Catalysis depends on Lys118, which acts as the Lowers pKa of active site Tyr.

This sequence belongs to the short-chain dehydrogenases/reductases (SDR) family.

It localises to the cytoplasm. The protein localises to the nucleus. This is an uncharacterized protein from Schizosaccharomyces pombe (strain 972 / ATCC 24843) (Fission yeast).